Reading from the N-terminus, the 498-residue chain is MEKHIDILIVGAGISGIGIAAHLSKDAPQRQFEIIERRENIGGTWDLFRYPGIRSDSDMSTFGFNFKPWQSPNVLASGSSIKGYLSEVVDEYDLKKKIHFKHRVLAANYDTASKKWYVEIEDAAQKKQTWIANFIVGCTGYYNYDQGFEPDFPNKDAFKGQFIHPQHWPENLDYVGKKVVIIGSGATAITLVPAMSKGGAEHVTMLQRSPTYIASIPSIDFVYDKMRKVLPEDLAYKLTRARNIGVQRGIYTLSQKQPKLVRKFLLKSIEMQLKGKVDMKHFTPSYNPWDQRLCVVPDGDLFKILRSGQASVETDQIEKFTETGIQLKSGKHLDADIVVSATGLEIQILGGIKGTIDGQPLDTSKSMLYQGVMVSDVPNMAMIIGYINASWTLKVDVAADYICRLLNYMDKQGYDEVIPEGDQTELMEDTVMGSLTSGYIARAANVMPKQGKHAPWKVTNNYLADRKALKNARFDDGVLHFDKKTDTVERKTKPKLVS.

Residues 4–24 traverse the membrane as a helical segment; that stretch reads HIDILIVGAGISGIGIAAHLS. Residues serine 15, glutamate 36, aspartate 56, phenylalanine 62, and valine 104 each contribute to the FAD site. 54–56 serves as a coordination point for NADP(+); the sequence is RSD. NADP(+)-binding positions include 184 to 190, 208 to 209, and 292 to 293; these read SGATAIT, RS, and RL. Valine 395 lines the FAD pocket.

This sequence belongs to the FAD-binding monooxygenase family. Requires FAD as cofactor.

Its subcellular location is the cell membrane. The protein operates within hydrocarbon metabolism; alkane degradation. Is able to catalyze the degradation of n-alkanes with C chain lengths of 32 and 36. Probably allows Acinetobacter baylyi strain ADP1 to grow on the long-chain n-alkane dotriacontane (C32H66) as a sole carbon source. The sequence is that of Probable FAD-binding monooxygenase AlmA from Acinetobacter baylyi (strain ATCC 33305 / BD413 / ADP1).